A 74-amino-acid polypeptide reads, in one-letter code: Large ribosomal subunit protein bL31 (74 aa).

Positions 16, 18, 38, and 41 each coordinate Zn(2+).

It belongs to the bacterial ribosomal protein bL31 family. Type A subfamily. Part of the 50S ribosomal subunit. It depends on Zn(2+) as a cofactor.

Functionally, binds the 23S rRNA. This chain is Large ribosomal subunit protein bL31, found in Acinetobacter baumannii (strain AB307-0294).